A 292-amino-acid polypeptide reads, in one-letter code: 4-hydroxy-tetrahydrodipicolinate synthase (292 aa).

Thr45 contacts pyruvate. Catalysis depends on Tyr133, which acts as the Proton donor/acceptor. Residue Lys161 is the Schiff-base intermediate with substrate of the active site. Pyruvate is bound at residue Ile203.

This sequence belongs to the DapA family. As to quaternary structure, homotetramer; dimer of dimers.

Its subcellular location is the cytoplasm. The enzyme catalyses L-aspartate 4-semialdehyde + pyruvate = (2S,4S)-4-hydroxy-2,3,4,5-tetrahydrodipicolinate + H2O + H(+). It functions in the pathway amino-acid biosynthesis; L-lysine biosynthesis via DAP pathway; (S)-tetrahydrodipicolinate from L-aspartate: step 3/4. In terms of biological role, catalyzes the condensation of (S)-aspartate-beta-semialdehyde [(S)-ASA] and pyruvate to 4-hydroxy-tetrahydrodipicolinate (HTPA). This is 4-hydroxy-tetrahydrodipicolinate synthase from Erwinia tasmaniensis (strain DSM 17950 / CFBP 7177 / CIP 109463 / NCPPB 4357 / Et1/99).